Consider the following 78-residue polypeptide: Large ribosomal subunit protein uL29 (78 aa).

The protein belongs to the universal ribosomal protein uL29 family.

The polypeptide is Large ribosomal subunit protein uL29 (Salinispora arenicola (strain CNS-205)).